The following is a 70-amino-acid chain: ATP synthase subunit c (70 aa).

A run of 2 helical transmembrane segments spans residues 4–24 (IASA…NGLI) and 47–67 (FVGV…AFMV).

Belongs to the ATPase C chain family. As to quaternary structure, F-type ATPases have 2 components, F(1) - the catalytic core - and F(0) - the membrane proton channel. F(1) has five subunits: alpha(3), beta(3), gamma(1), delta(1), epsilon(1). F(0) has three main subunits: a(1), b(2) and c(10-14). The alpha and beta chains form an alternating ring which encloses part of the gamma chain. F(1) is attached to F(0) by a central stalk formed by the gamma and epsilon chains, while a peripheral stalk is formed by the delta and b chains.

The protein resides in the cell membrane. F(1)F(0) ATP synthase produces ATP from ADP in the presence of a proton or sodium gradient. F-type ATPases consist of two structural domains, F(1) containing the extramembraneous catalytic core and F(0) containing the membrane proton channel, linked together by a central stalk and a peripheral stalk. During catalysis, ATP synthesis in the catalytic domain of F(1) is coupled via a rotary mechanism of the central stalk subunits to proton translocation. Functionally, key component of the F(0) channel; it plays a direct role in translocation across the membrane. A homomeric c-ring of between 10-14 subunits forms the central stalk rotor element with the F(1) delta and epsilon subunits. This chain is ATP synthase subunit c, found in Priestia megaterium (strain ATCC 12872 / QMB1551) (Bacillus megaterium).